The following is a 105-amino-acid chain: Large ribosomal subunit protein eL42z/eL42y (105 aa).

The tract at residues 28-57 (YKKGKDSLAAQGKRRYDRKQSGYGGQTKPV) is disordered.

The protein belongs to the eukaryotic ribosomal protein eL42 family.

The polypeptide is Large ribosomal subunit protein eL42z/eL42y (RPL36AA) (Arabidopsis thaliana (Mouse-ear cress)).